The following is a 365-amino-acid chain: Formamidopyrimidine-DNA glycosylase (365 aa).

The active-site Schiff-base intermediate with DNA is the Pro2. The active-site Proton donor is Glu3. Lys61 serves as the catalytic Proton donor; for beta-elimination activity. Residues Arg121–Ser150 are disordered. Over residues Thr134 to Ser150 the composition is skewed to polar residues. Residues His186, Arg205, and Arg246 each contribute to the DNA site. The FPG-type zinc finger occupies Arg331–Arg365. Residue Arg355 is the Proton donor; for delta-elimination activity of the active site.

It belongs to the FPG family. In terms of assembly, monomer. Zn(2+) serves as cofactor.

It carries out the reaction Hydrolysis of DNA containing ring-opened 7-methylguanine residues, releasing 2,6-diamino-4-hydroxy-5-(N-methyl)formamidopyrimidine.. The enzyme catalyses 2'-deoxyribonucleotide-(2'-deoxyribose 5'-phosphate)-2'-deoxyribonucleotide-DNA = a 3'-end 2'-deoxyribonucleotide-(2,3-dehydro-2,3-deoxyribose 5'-phosphate)-DNA + a 5'-end 5'-phospho-2'-deoxyribonucleoside-DNA + H(+). Its function is as follows. Involved in base excision repair of DNA damaged by oxidation or by mutagenic agents. Acts as a DNA glycosylase that recognizes and removes damaged bases. Has a preference for oxidized purines, such as 7,8-dihydro-8-oxoguanine (8-oxoG). Has AP (apurinic/apyrimidinic) lyase activity and introduces nicks in the DNA strand. Cleaves the DNA backbone by beta-delta elimination to generate a single-strand break at the site of the removed base with both 3'- and 5'-phosphates. The polypeptide is Formamidopyrimidine-DNA glycosylase (Nitratidesulfovibrio vulgaris (strain ATCC 29579 / DSM 644 / CCUG 34227 / NCIMB 8303 / VKM B-1760 / Hildenborough) (Desulfovibrio vulgaris)).